The primary structure comprises 208 residues: UPF0319 protein VSAL_I2129 (208 aa).

Positions 1 to 21 are cleaved as a signal peptide; the sequence is MKFHSFLAAGLCLLTSLSASA.

Belongs to the UPF0319 family.

The sequence is that of UPF0319 protein VSAL_I2129 from Aliivibrio salmonicida (strain LFI1238) (Vibrio salmonicida (strain LFI1238)).